The chain runs to 136 residues: MRTLWIVAVLLVGEGSLIQLWEMIFQEMGKGAAKKYGLYGCNCGMGHRGRPVDATDRCCSVHKCCYKKLTDCDPKTDRYSYSWENGAIVCGGDDPCRKEVCECDKATTICFRDNLDTYDKKYKIYLKFLCKKPEPC.

Residues 1–15 form the signal peptide; sequence MRTLWIVAVLLVGEG. Disulfide bonds link cysteine 41/cysteine 130, cysteine 43/cysteine 59, cysteine 58/cysteine 110, cysteine 64/cysteine 136, cysteine 65/cysteine 103, cysteine 72/cysteine 96, and cysteine 90/cysteine 101. Histidine 62 is an active-site residue. The active site involves aspartate 104.

Belongs to the phospholipase A2 family. Group II subfamily. K49 sub-subfamily. As to expression, expressed by the venom gland.

The protein localises to the secreted. It catalyses the reaction a 1,2-diacyl-sn-glycero-3-phosphocholine + H2O = a 1-acyl-sn-glycero-3-phosphocholine + a fatty acid + H(+). Its function is as follows. PLA2 catalyzes the calcium-dependent hydrolysis of the 2-acyl groups in 3-sn-phosphoglycerides. The sequence is that of Basic phospholipase A2 Tgc-K49 from Trimeresurus gracilis (Kikuchi habu).